The primary structure comprises 101 residues: Small ribosomal subunit protein uS10 (101 aa).

Belongs to the universal ribosomal protein uS10 family. As to quaternary structure, part of the 30S ribosomal subunit.

Functionally, involved in the binding of tRNA to the ribosomes. In Corynebacterium urealyticum (strain ATCC 43042 / DSM 7109), this protein is Small ribosomal subunit protein uS10.